We begin with the raw amino-acid sequence, 309 residues long: Homoserine O-succinyltransferase (309 aa).

Catalysis depends on C142, which acts as the Acyl-thioester intermediate. Substrate-binding residues include K163 and S192. Residue H235 is the Proton acceptor of the active site. E237 is an active-site residue. R249 lines the substrate pocket.

This sequence belongs to the MetA family.

Its subcellular location is the cytoplasm. It catalyses the reaction L-homoserine + succinyl-CoA = O-succinyl-L-homoserine + CoA. Its pathway is amino-acid biosynthesis; L-methionine biosynthesis via de novo pathway; O-succinyl-L-homoserine from L-homoserine: step 1/1. Transfers a succinyl group from succinyl-CoA to L-homoserine, forming succinyl-L-homoserine. The sequence is that of Homoserine O-succinyltransferase from Pectobacterium carotovorum subsp. carotovorum (strain PC1).